Here is a 243-residue protein sequence, read N- to C-terminus: DNA repair protein RecO (243 aa).

It belongs to the RecO family.

Involved in DNA repair and RecF pathway recombination. The sequence is that of DNA repair protein RecO from Bartonella quintana (strain Toulouse) (Rochalimaea quintana).